Here is a 1006-residue protein sequence, read N- to C-terminus: Beta-galactosidase (1006 aa).

The signal sequence occupies residues 1–19 (MKLSSACAIALLAAQAAGA). Asn-156 carries an N-linked (GlcNAc...) asparagine glycan. The active-site Proton donor is Glu-200. Glu-298 acts as the Nucleophile in catalysis. 10 N-linked (GlcNAc...) asparagine glycosylation sites follow: Asn-373, Asn-402, Asn-422, Asn-478, Asn-522, Asn-622, Asn-739, Asn-760, Asn-777, and Asn-805.

Belongs to the glycosyl hydrolase 35 family.

It catalyses the reaction Hydrolysis of terminal non-reducing beta-D-galactose residues in beta-D-galactosides.. Its function is as follows. Cleaves beta-linked terminal galactosyl residues from gangliosides, glycoproteins, and glycosaminoglycans. The chain is Beta-galactosidase (lacA) from Aspergillus niger.